A 167-amino-acid chain; its full sequence is Putative lipoprotein YteS (167 aa).

Positions 1 to 20 (MTKRIRTALCVIVSVLFLAS) are cleaved as a signal peptide. The N-palmitoyl cysteine moiety is linked to residue Cys21. Residue Cys21 is the site of S-diacylglycerol cysteine attachment.

The protein localises to the cell membrane. May play a role in the degradation of type I rhamnogalacturonan derived from plant cell walls. In Bacillus subtilis (strain 168), this protein is Putative lipoprotein YteS (yteS).